The chain runs to 412 residues: Multifunctional CCA protein (412 aa).

Glycine 8 and arginine 11 together coordinate ATP. Residues glycine 8 and arginine 11 each coordinate CTP. Glutamate 21 and aspartate 23 together coordinate Mg(2+). Positions 91, 137, and 140 each coordinate ATP. The CTP site is built by arginine 91, arginine 137, and arginine 140. The HD domain occupies 228 to 329 (CGIHTLMSLQ…WRLLQRLDVL (102 aa)).

This sequence belongs to the tRNA nucleotidyltransferase/poly(A) polymerase family. Bacterial CCA-adding enzyme type 1 subfamily. As to quaternary structure, monomer. Can also form homodimers and oligomers. Mg(2+) serves as cofactor. Requires Ni(2+) as cofactor.

The enzyme catalyses a tRNA precursor + 2 CTP + ATP = a tRNA with a 3' CCA end + 3 diphosphate. It carries out the reaction a tRNA with a 3' CCA end + 2 CTP + ATP = a tRNA with a 3' CCACCA end + 3 diphosphate. In terms of biological role, catalyzes the addition and repair of the essential 3'-terminal CCA sequence in tRNAs without using a nucleic acid template. Adds these three nucleotides in the order of C, C, and A to the tRNA nucleotide-73, using CTP and ATP as substrates and producing inorganic pyrophosphate. tRNA 3'-terminal CCA addition is required both for tRNA processing and repair. Also involved in tRNA surveillance by mediating tandem CCA addition to generate a CCACCA at the 3' terminus of unstable tRNAs. While stable tRNAs receive only 3'-terminal CCA, unstable tRNAs are marked with CCACCA and rapidly degraded. This is Multifunctional CCA protein from Acinetobacter baumannii (strain ATCC 17978 / DSM 105126 / CIP 53.77 / LMG 1025 / NCDC KC755 / 5377).